The chain runs to 254 residues: Cytokine-inducible SH2-containing protein (254 aa).

One can recognise an SH2 domain in the interval 82–188 (WYWGSITASE…ATTPALPTPK (107 aa)). The disordered stretch occupies residues 171–195 (TRSDSPDLATTPALPTPKEDAPGDP). Residues 205–253 (KLVQPFVRRSSTRSLQHLCRLVINRLVVDVDCLPLPRRMADYLRQYPFQ) enclose the SOCS box domain.

Stably associated with the tyrosine-phosphorylated IL3 receptor beta chain and tyrosine-phosphorylated EPO receptor (EPOR).

Its pathway is protein modification; protein ubiquitination. Functionally, SOCS family proteins form part of a classical negative feedback system that regulates cytokine signal transduction. CIS is involved in the negative regulation of cytokines that signal through the JAK-STAT5 pathway such as erythropoietin, prolactin and interleukin 3 (IL3) receptor. Inhibits STAT5 trans-activation by suppressing its tyrosine phosphorylation. May be a substrate recognition component of a SCF-like ECS (Elongin BC-CUL2/5-SOCS-box protein) E3 ubiquitin-protein ligase complex which mediates the ubiquitination and subsequent proteasomal degradation of target proteins. The chain is Cytokine-inducible SH2-containing protein (CISH) from Bos taurus (Bovine).